Consider the following 111-residue polypeptide: Nitrogen regulatory protein P-II (111 aa).

Tyr50 carries the O-UMP-tyrosine modification.

Belongs to the P(II) protein family. Homotrimer.

In terms of biological role, in nitrogen-limiting conditions, when the ratio of Gln to 2-ketoglutarate decreases, P-II is uridylylated to P-II-UMP. P-II-UMP allows the deadenylation of glutamine synthetase (GS), thus activating the enzyme. Conversely, in nitrogen excess P-II is deuridylated and promotes the adenylation of GS. P-II indirectly controls the transcription of the GS gene (glnA). P-II prevents NR-II-catalyzed conversion of NR-I to NR-I-phosphate, the transcriptional activator of glnA. When P-II is uridylylated to P-II-UMP, these events are reversed. The protein is Nitrogen regulatory protein P-II (glnB) of Rhizobium leguminosarum bv. viciae.